Reading from the N-terminus, the 159-residue chain is Fatty acid-binding protein homolog 1 (159 aa).

The signal sequence occupies residues 1 to 17 (MCAKIALLLVLVGAASA).

Belongs to the calycin superfamily. Fatty-acid binding protein (FABP) family. In terms of tissue distribution, first detected in hypodermal precursor cells at the time of gastrulation. From the two-fold stage through to three-fold stages, expression is localized exclusively to hyp-7 but disappears in newly hatched L1s and subsequent developmental stages. Expression from L1 to adult stages is found in a single neuron in the ventral cord with a process into the nerve ring.

The protein localises to the secreted. Functionally, may play a role in sequestering potentially toxic fatty acids and their peroxidation products, or it may be involved in the maintenance of the impermeable lipid layer of the eggshell. This is Fatty acid-binding protein homolog 1 (lbp-1) from Caenorhabditis elegans.